The primary structure comprises 274 residues: 4-deoxy-L-threo-5-hexosulose-uronate ketol-isomerase (274 aa).

Zn(2+) is bound by residues His192, His194, Glu199, and His241.

This sequence belongs to the KduI family. It depends on Zn(2+) as a cofactor.

The enzyme catalyses 5-dehydro-4-deoxy-D-glucuronate = 3-deoxy-D-glycero-2,5-hexodiulosonate. Its pathway is glycan metabolism; pectin degradation; 2-dehydro-3-deoxy-D-gluconate from pectin: step 4/5. Catalyzes the isomerization of 5-dehydro-4-deoxy-D-glucuronate to 3-deoxy-D-glycero-2,5-hexodiulosonate. This chain is 4-deoxy-L-threo-5-hexosulose-uronate ketol-isomerase, found in Agrobacterium fabrum (strain C58 / ATCC 33970) (Agrobacterium tumefaciens (strain C58)).